The primary structure comprises 145 residues: Lymphocyte antigen 6 complex locus protein G5c (145 aa).

Positions 1 to 38 (MSGLAASWSLKPLGPHGVTQALCAVLLAVLVTMNVVLG) are cleaved as a signal peptide. Residues 55–145 (LHCYRCLLET…NPKNRKNTMH (91 aa)) form the UPAR/Ly6 domain. 5 cysteine pairs are disulfide-bonded: Cys-57–Cys-84, Cys-60–Cys-69, Cys-76–Cys-102, Cys-111–Cys-128, and Cys-129–Cys-134. Asn-91 carries N-linked (GlcNAc...) asparagine glycosylation.

In terms of assembly, forms oligomers. Post-translationally, N-glycosylated. Expression restricted to the caput of epididymis. Detected only from day 24 postnatum.

The protein localises to the secreted. Functionally, may have a role in hematopoietic cell differentiation. This is Lymphocyte antigen 6 complex locus protein G5c (Ly6g5c) from Rattus norvegicus (Rat).